Consider the following 477-residue polypeptide: Trigger factor (477 aa).

Positions 174-261 constitute a PPIase FKBP-type domain; sequence GDIAVVSFKG…LKDLKEKELP (88 aa). The segment at 435 to 477 is disordered; the sequence is VNEKTTKTSKATKTSKTTKATKTATKTTKTTKTTKTQNKKEKK. Residues 442 to 470 are compositionally biased toward low complexity; it reads TSKATKTSKTTKATKTATKTTKTTKTTKT.

The protein belongs to the FKBP-type PPIase family. Tig subfamily.

The protein localises to the cytoplasm. The catalysed reaction is [protein]-peptidylproline (omega=180) = [protein]-peptidylproline (omega=0). Functionally, involved in protein export. Acts as a chaperone by maintaining the newly synthesized protein in an open conformation. Functions as a peptidyl-prolyl cis-trans isomerase. The protein is Trigger factor of Prochlorococcus marinus (strain MIT 9301).